The chain runs to 160 residues: 6,7-dimethyl-8-ribityllumazine synthase (160 aa).

5-amino-6-(D-ribitylamino)uracil is bound by residues tryptophan 27, 59-61 (AIE), and 81-83 (VVI). Residue 86-87 (DT) coordinates (2S)-2-hydroxy-3-oxobutyl phosphate. Histidine 89 (proton donor) is an active-site residue. Asparagine 114 serves as a coordination point for 5-amino-6-(D-ribitylamino)uracil. Arginine 128 provides a ligand contact to (2S)-2-hydroxy-3-oxobutyl phosphate.

The protein belongs to the DMRL synthase family. Homopentamer.

The enzyme catalyses (2S)-2-hydroxy-3-oxobutyl phosphate + 5-amino-6-(D-ribitylamino)uracil = 6,7-dimethyl-8-(1-D-ribityl)lumazine + phosphate + 2 H2O + H(+). It participates in cofactor biosynthesis; riboflavin biosynthesis; riboflavin from 2-hydroxy-3-oxobutyl phosphate and 5-amino-6-(D-ribitylamino)uracil: step 1/2. Catalyzes the formation of 6,7-dimethyl-8-ribityllumazine by condensation of 5-amino-6-(D-ribitylamino)uracil with 3,4-dihydroxy-2-butanone 4-phosphate. This is the penultimate step in the biosynthesis of riboflavin. The protein is 6,7-dimethyl-8-ribityllumazine synthase of Mycobacterium leprae (strain Br4923).